The chain runs to 408 residues: MKCLCFIVLLAIVIAQSYVGVEAAPSDGFVSRNGVQFILNGKPFYANGFNAYWLAYEATDPTTRFKITNVFQNATSLGLTIARTWGFRDGAIYRALQTAPGSYDEQTFQGLDFVIAEAKRIGIKLIILLVNNWDDYGGKKQYVDWARSKGEVVSSNDDFYRNPVIKDFYKNHVKTVLNRVNTFTKVAYKDEPAIMAWQLMNEPRCGVDKSGKTLMDWINEMAPFVKSVDPNHLLSTGHEGFYGDSSPERKNSLNPVSANTVGADFIANHNIDAIDFASMHCGSDLWFQRLDQNSRLAFIKRWLEGHIEDAQNILKKPVILAEFGLGSDTPRYTLANRDGVFTTTYDIIYASAQKGGSAAGALFWEVISEGMSNFAGPSSIILSDKSSTVNIISEHARKMGLLGETTRK.

Positions 1-23 (MKCLCFIVLLAIVIAQSYVGVEA) are cleaved as a signal peptide. N73 carries an N-linked (GlcNAc...) asparagine glycan. The substrate site is built by W85 and N201. Residue E202 is the Proton donor of the active site. The active-site Nucleophile is E322. Position 364 (W364) interacts with substrate.

The protein belongs to the glycosyl hydrolase 5 (cellulase A) family.

The protein localises to the secreted. The enzyme catalyses Random hydrolysis of (1-&gt;4)-beta-D-mannosidic linkages in mannans, galactomannans and glucomannans.. This chain is Putative mannan endo-1,4-beta-mannosidase 4 (MAN4), found in Arabidopsis thaliana (Mouse-ear cress).